A 138-amino-acid polypeptide reads, in one-letter code: Cysteine desulfuration protein SufE (138 aa).

Cysteine 51 acts as the Cysteine persulfide intermediate in catalysis.

This sequence belongs to the SufE family. Homodimer. Interacts with SufS.

It is found in the cytoplasm. The protein operates within cofactor biosynthesis; iron-sulfur cluster biosynthesis. Functionally, participates in cysteine desulfuration mediated by SufS. Cysteine desulfuration mobilizes sulfur from L-cysteine to yield L-alanine and constitutes an essential step in sulfur metabolism for biosynthesis of a variety of sulfur-containing biomolecules. Functions as a sulfur acceptor for SufS, by mediating the direct transfer of the sulfur atom from the S-sulfanylcysteine of SufS, an intermediate product of cysteine desulfuration process. This Escherichia fergusonii (strain ATCC 35469 / DSM 13698 / CCUG 18766 / IAM 14443 / JCM 21226 / LMG 7866 / NBRC 102419 / NCTC 12128 / CDC 0568-73) protein is Cysteine desulfuration protein SufE.